The following is a 238-amino-acid chain: Ribonuclease PH (238 aa).

Phosphate is bound by residues Arg86 and 124 to 126; that span reads GTR.

This sequence belongs to the RNase PH family. As to quaternary structure, homohexameric ring arranged as a trimer of dimers.

It carries out the reaction tRNA(n+1) + phosphate = tRNA(n) + a ribonucleoside 5'-diphosphate. Its function is as follows. Phosphorolytic 3'-5' exoribonuclease that plays an important role in tRNA 3'-end maturation. Removes nucleotide residues following the 3'-CCA terminus of tRNAs; can also add nucleotides to the ends of RNA molecules by using nucleoside diphosphates as substrates, but this may not be physiologically important. Probably plays a role in initiation of 16S rRNA degradation (leading to ribosome degradation) during starvation. This is Ribonuclease PH from Pasteurella multocida (strain Pm70).